We begin with the raw amino-acid sequence, 420 residues long: 3-phosphoshikimate 1-carboxyvinyltransferase (420 aa).

The 3-phosphoshikimate site is built by lysine 20, serine 21, and arginine 25. Lysine 20 provides a ligand contact to phosphoenolpyruvate. Arginine 119 serves as a coordination point for phosphoenolpyruvate. The 3-phosphoshikimate site is built by serine 161, serine 162, glutamine 163, serine 189, aspartate 303, glutamine 326, and lysine 330. Phosphoenolpyruvate is bound at residue glutamine 163. Aspartate 303 acts as the Proton acceptor in catalysis. The phosphoenolpyruvate site is built by arginine 334, arginine 375, and lysine 400.

Belongs to the EPSP synthase family. As to quaternary structure, monomer.

The protein resides in the cytoplasm. It carries out the reaction 3-phosphoshikimate + phosphoenolpyruvate = 5-O-(1-carboxyvinyl)-3-phosphoshikimate + phosphate. The protein operates within metabolic intermediate biosynthesis; chorismate biosynthesis; chorismate from D-erythrose 4-phosphate and phosphoenolpyruvate: step 6/7. Catalyzes the transfer of the enolpyruvyl moiety of phosphoenolpyruvate (PEP) to the 5-hydroxyl of shikimate-3-phosphate (S3P) to produce enolpyruvyl shikimate-3-phosphate and inorganic phosphate. The protein is 3-phosphoshikimate 1-carboxyvinyltransferase of Dehalococcoides mccartyi (strain ATCC BAA-2100 / JCM 16839 / KCTC 5957 / BAV1).